The following is a 137-amino-acid chain: Lysozyme (137 aa).

Residues 1 to 20 form the signal peptide; the sequence is MSAVLVLALVLLSLTCVTDA. In terms of domain architecture, I-type lysozyme spans 21–134; that stretch reads ISDACLTCIC…WNAVKNQGCS (114 aa). Cystine bridges form between C25–C102, C30–C37, C42–C51, C64–C84, C74–C80, and C98–C116. The active-site Proton donor is E33. Catalysis depends on D45, which acts as the Nucleophile. 57-63 provides a ligand contact to substrate; that stretch reads KKSYWID. Substrate contacts are provided by residues Y88 and 109 to 111; that span reads HNG.

Belongs to the glycosyl hydrolase 22 family. Type-I lysozyme subfamily.

It is found in the secreted. It carries out the reaction Hydrolysis of (1-&gt;4)-beta-linkages between N-acetylmuramic acid and N-acetyl-D-glucosamine residues in a peptidoglycan and between N-acetyl-D-glucosamine residues in chitodextrins.. In terms of biological role, has bacteriolytic activity. May play a role in digestion and in the host defense mechanisms against invading microbes. This Ostrea edulis (Native oyster) protein is Lysozyme (lysoz).